A 227-amino-acid chain; its full sequence is MAYPMQLGLQDATSPIMEELMNFHDHTLMIVFLISSLVLYLISLMLTTKLIHTNTMDAQEVETIWTILPAIILVLIALPSLRILYMMDEINNPVLTVKTMGHQWYWSYEYTDYEDLCFDSYMIPTNELKPGELRLLEVDNRVILPIELPIRMLISSEDVLHSWAVPSLGLKTDAIPGRLNQATVTSNRPGIFYGQCSEICGSNHSFMPIVLEMIPLKFFENWSSSMT.

Topologically, residues 1–14 (MAYPMQLGLQDATS) are mitochondrial intermembrane. Residues 15 to 45 (PIMEELMNFHDHTLMIVFLISSLVLYLISLM) form a helical membrane-spanning segment. The Mitochondrial matrix segment spans residues 46–59 (LTTKLIHTNTMDAQ). A helical transmembrane segment spans residues 60–87 (EVETIWTILPAIILVLIALPSLRILYMM). Residues 88-227 (DEINNPVLTV…FFENWSSSMT (140 aa)) are Mitochondrial intermembrane-facing. Cu cation is bound by residues His-161, Cys-196, Glu-198, Cys-200, His-204, and Met-207. Glu-198 lines the Mg(2+) pocket.

This sequence belongs to the cytochrome c oxidase subunit 2 family. Component of the cytochrome c oxidase (complex IV, CIV), a multisubunit enzyme composed of 14 subunits. The complex is composed of a catalytic core of 3 subunits MT-CO1, MT-CO2 and MT-CO3, encoded in the mitochondrial DNA, and 11 supernumerary subunits COX4I, COX5A, COX5B, COX6A, COX6B, COX6C, COX7A, COX7B, COX7C, COX8 and NDUFA4, which are encoded in the nuclear genome. The complex exists as a monomer or a dimer and forms supercomplexes (SCs) in the inner mitochondrial membrane with NADH-ubiquinone oxidoreductase (complex I, CI) and ubiquinol-cytochrome c oxidoreductase (cytochrome b-c1 complex, complex III, CIII), resulting in different assemblies (supercomplex SCI(1)III(2)IV(1) and megacomplex MCI(2)III(2)IV(2)). Found in a complex with TMEM177, COA6, COX18, COX20, SCO1 and SCO2. Interacts with TMEM177 in a COX20-dependent manner. Interacts with COX20. Interacts with COX16. Cu cation serves as cofactor.

The protein localises to the mitochondrion inner membrane. The catalysed reaction is 4 Fe(II)-[cytochrome c] + O2 + 8 H(+)(in) = 4 Fe(III)-[cytochrome c] + 2 H2O + 4 H(+)(out). Its function is as follows. Component of the cytochrome c oxidase, the last enzyme in the mitochondrial electron transport chain which drives oxidative phosphorylation. The respiratory chain contains 3 multisubunit complexes succinate dehydrogenase (complex II, CII), ubiquinol-cytochrome c oxidoreductase (cytochrome b-c1 complex, complex III, CIII) and cytochrome c oxidase (complex IV, CIV), that cooperate to transfer electrons derived from NADH and succinate to molecular oxygen, creating an electrochemical gradient over the inner membrane that drives transmembrane transport and the ATP synthase. Cytochrome c oxidase is the component of the respiratory chain that catalyzes the reduction of oxygen to water. Electrons originating from reduced cytochrome c in the intermembrane space (IMS) are transferred via the dinuclear copper A center (CU(A)) of subunit 2 and heme A of subunit 1 to the active site in subunit 1, a binuclear center (BNC) formed by heme A3 and copper B (CU(B)). The BNC reduces molecular oxygen to 2 water molecules using 4 electrons from cytochrome c in the IMS and 4 protons from the mitochondrial matrix. This chain is Cytochrome c oxidase subunit 2 (MT-CO2), found in Desmodillus auricularis (Cape short-eared gerbil).